The following is a 595-amino-acid chain: 73 kDa paraflagellar rod protein (595 aa).

The interval 294–317 is disordered; it reads DAEATKRHAANKEKSDRYIRENED. Residues 317–337 form a calmodulin-binding region; that stretch reads DRQEETWNKIQDLERQLQKLG.

Heterodimer of a 69 kDa and a 73 kDa protein.

It localises to the cell projection. The protein resides in the cilium. Its subcellular location is the flagellum. It is found in the cytoplasm. The protein localises to the cytoskeleton. Its function is as follows. Major component of the paraflagellar rod (PFR). The PFR is a highly ordered lattices of fibrous proteins that are located inside the flagellum and assume a fixed orientation with respect to the microtubular axoneme. The sequence is that of 73 kDa paraflagellar rod protein (PFRC) from Trypanosoma brucei brucei.